The sequence spans 51 residues: Large ribosomal subunit protein eL40 (51 aa).

Positions 17, 20, 31, and 34 each coordinate Zn(2+).

It belongs to the eukaryotic ribosomal protein eL40 family. As to quaternary structure, part of the 50S ribosomal subunit. It depends on Zn(2+) as a cofactor.

The sequence is that of Large ribosomal subunit protein eL40 from Thermococcus kodakarensis (strain ATCC BAA-918 / JCM 12380 / KOD1) (Pyrococcus kodakaraensis (strain KOD1)).